A 961-amino-acid chain; its full sequence is MDEQALMGLNPNADACYRQRALAYFEQLKASLDGWEVCAEALAKGVYSDDHVKFFCFQVLEHQIKFRHGSLSAAQQQLIRETLMKWLQTQLMNVHPEKPFIRNKAAQVFALTFVMEYLTLWPKFFFDVLALVGLNPNGVDIYLRTLMAIDAEVVDRDILHSPEETRRNTLIKDGMREQCIPALVESWFQILQTYQHTHSELTCQCLEVVGAFVSWIDLNLIANDRFVNLLLSHMSMEELREAACDCLFEIVNKGMDPVDKTKLVESLCQVLQSAGFFNVEQEEDVDFLAKFSRLVNGMGQSLVLSWTKLSKTADEKISAETLRAVESKVPLMLQLLIHEDDDISANIVCFCYDYLHVLKQLPALNEQQKSNVEAIMLAVMSKLKYDDEYNFENEGEDEAMFVEYRKQLKMLLDRLAQVSPELLLEAVHRVFNATMQSWQTLQFMEVEVSIRLLYMLGEALPASHGAHFSGDSAKTSTLQAMMRTLVSCGVSEYQHSSVTLEFFETVVRYDKFFLVEPQHIPAVLMAFLDHRGLRHSSPKVRSRVAYLFSRFIKTLHKHMNAFIEDILSRIQDLLELAPPENGFPALLSSDDQLFMFETAGVLIVNGESPAERKQGLMRGLLSPLMEAFRMLLEKLPLEPDEERQTALADCLSHAVGFASRTSKAFSNKQTVKQCGCSEVYLDCLQTFLPALSCPVQRGALRSAVRSFLHRMIICLEEEVLPFIPAASQHMLKDCEARDLQEFIPLISQITAKFKNQVSPFLQEIFMPLVMSIFEVLSRPAEENDQTAALEKQMLRRSYFSFIQTIASSSSSQVMASQGAENIERVLFTIIQGAVDFPDPVAQKTCFIILSRLVELWGGKDGLVGFPDFIYKHIIPACFMAPLKTTFDLSDAQTVLTLSECSLTLHMIHLKRGPECLQFLQEYLPSLHVSPEITQELCQVLQQPDVKVLKNYMKVFFQQAKL.

Belongs to the exportin family.

It localises to the cytoplasm. Its subcellular location is the nucleus. In terms of biological role, mediates the nuclear export of aminoacylated tRNAs. The sequence is that of Exportin-T (xpot) from Danio rerio (Zebrafish).